The following is a 378-amino-acid chain: MKIVADENMPFVEALFGGLGDVVRVNGRSLSAKDLKDADVLLVRSVTKVNQTLLQDCQSLKFVGSATIGTDHIDQAYLKHRGIPFANAPGCNATGVGEYAFIAALELAQREQVNLKDKVIGIVGAGNTGMAAAKCFAAFGNKVLVCDPFKTQDMLYFPLVGLDELIQQADIISLHVPLSDNGPYKTWYLFDEARLESLTPNTWLFNCCRGEVIDNRALIEFKRRRDDIKLVLDVWQGEPHPMAELVPLTEFATPHIAGYSLEGKARGTFMLYQALATSLNLPVKASLQSLLPSHFVNQLGLASQTELTQGQLLSLARLVYDLRDDDKNFRQAFDKTNGFDQLRKNHTHRREFSALTLASSGGCEVNWLTKLGFSGVGR.

Residues S45 and T67 each coordinate substrate. D147 lines the NAD(+) pocket. Residue R209 is part of the active site. D233 contacts NAD(+). The active site involves E238. The active-site Proton donor is H255. Residue G258 participates in NAD(+) binding. Y259 is a binding site for substrate.

This sequence belongs to the D-isomer specific 2-hydroxyacid dehydrogenase family. PdxB subfamily. In terms of assembly, homodimer.

The protein localises to the cytoplasm. It catalyses the reaction 4-phospho-D-erythronate + NAD(+) = (R)-3-hydroxy-2-oxo-4-phosphooxybutanoate + NADH + H(+). Its pathway is cofactor biosynthesis; pyridoxine 5'-phosphate biosynthesis; pyridoxine 5'-phosphate from D-erythrose 4-phosphate: step 2/5. In terms of biological role, catalyzes the oxidation of erythronate-4-phosphate to 3-hydroxy-2-oxo-4-phosphonooxybutanoate. The sequence is that of Erythronate-4-phosphate dehydrogenase from Shewanella denitrificans (strain OS217 / ATCC BAA-1090 / DSM 15013).